The following is a 415-amino-acid chain: Ribulose bisphosphate carboxylase/oxygenase activase (415 aa).

ATP is bound at residue 37–44 (GRKGEGKT).

It belongs to the RuBisCO activase family.

Functionally, activation of RuBisCO (ribulose-1,5-bisohosphate carboxylase/oxygenase; EC 4.1.1.39) involves the ATP-dependent carboxylation of the epsilon-amino group of lysine leading to a carbamate structure. This Anabaena sp. (strain CA / ATCC 33047) protein is Ribulose bisphosphate carboxylase/oxygenase activase (rca).